The following is a 393-amino-acid chain: Formate-dependent phosphoribosylglycinamide formyltransferase (393 aa).

Residues glutamate 15–leucine 16 and glutamate 75 contribute to the N(1)-(5-phospho-beta-D-ribosyl)glycinamide site. ATP-binding positions include arginine 107, lysine 148, serine 153–glutamine 158, glutamate 188–isoleucine 191, and glutamate 196. Positions asparagine 112 to leucine 302 constitute an ATP-grasp domain. Positions 261 and 273 each coordinate Mg(2+). N(1)-(5-phospho-beta-D-ribosyl)glycinamide contacts are provided by residues aspartate 280, lysine 350, and arginine 357–arginine 358.

The protein belongs to the PurK/PurT family. In terms of assembly, homodimer.

It carries out the reaction N(1)-(5-phospho-beta-D-ribosyl)glycinamide + formate + ATP = N(2)-formyl-N(1)-(5-phospho-beta-D-ribosyl)glycinamide + ADP + phosphate + H(+). The protein operates within purine metabolism; IMP biosynthesis via de novo pathway; N(2)-formyl-N(1)-(5-phospho-D-ribosyl)glycinamide from N(1)-(5-phospho-D-ribosyl)glycinamide (formate route): step 1/1. In terms of biological role, involved in the de novo purine biosynthesis. Catalyzes the transfer of formate to 5-phospho-ribosyl-glycinamide (GAR), producing 5-phospho-ribosyl-N-formylglycinamide (FGAR). Formate is provided by PurU via hydrolysis of 10-formyl-tetrahydrofolate. This Prochlorococcus marinus (strain SARG / CCMP1375 / SS120) protein is Formate-dependent phosphoribosylglycinamide formyltransferase.